Here is a 668-residue protein sequence, read N- to C-terminus: Threonine--tRNA ligase (668 aa).

The region spanning 1 to 64 (MSQAISLTFP…TDGKIEIITR (64 aa)) is the TGS domain. The segment at 245 to 553 (DHRKLGREMD…LIENFAGHMP (309 aa)) is catalytic. The Zn(2+) site is built by C347, H398, and H530.

Belongs to the class-II aminoacyl-tRNA synthetase family. In terms of assembly, homodimer. Zn(2+) serves as cofactor.

The protein localises to the cytoplasm. It carries out the reaction tRNA(Thr) + L-threonine + ATP = L-threonyl-tRNA(Thr) + AMP + diphosphate + H(+). Its function is as follows. Catalyzes the attachment of threonine to tRNA(Thr) in a two-step reaction: L-threonine is first activated by ATP to form Thr-AMP and then transferred to the acceptor end of tRNA(Thr). Also edits incorrectly charged L-seryl-tRNA(Thr). The sequence is that of Threonine--tRNA ligase from Rhizobium etli (strain CIAT 652).